The chain runs to 206 residues: Uridine kinase (206 aa).

Residue glycine 9 to threonine 16 coordinates ATP.

This sequence belongs to the uridine kinase family.

Its subcellular location is the cytoplasm. It catalyses the reaction uridine + ATP = UMP + ADP + H(+). The enzyme catalyses cytidine + ATP = CMP + ADP + H(+). It participates in pyrimidine metabolism; CTP biosynthesis via salvage pathway; CTP from cytidine: step 1/3. Its pathway is pyrimidine metabolism; UMP biosynthesis via salvage pathway; UMP from uridine: step 1/1. This chain is Uridine kinase, found in Borrelia hermsii (strain HS1 / DAH).